The sequence spans 339 residues: Protoheme IX farnesyltransferase (339 aa).

Residues 1-27 are disordered; the sequence is MTVADPRLTDAPAHSRTSLLGRRRGGR. 9 helical membrane passes run 45–65, 67–87, 117–136, 140–159, 165–185, 191–211, 236–256, 257–277, and 309–329; these read IVEL…GGLP, GWLI…ANTL, ALVF…VAFV, SAAL…TLLL, QNIV…WTAV, WAPF…YWPL, VSRQ…LLVP, LGGA…GFLV, and PMGV…AVAV.

It belongs to the UbiA prenyltransferase family. Protoheme IX farnesyltransferase subfamily.

It localises to the cell membrane. The enzyme catalyses heme b + (2E,6E)-farnesyl diphosphate + H2O = Fe(II)-heme o + diphosphate. It functions in the pathway porphyrin-containing compound metabolism; heme O biosynthesis; heme O from protoheme: step 1/1. Converts heme B (protoheme IX) to heme O by substitution of the vinyl group on carbon 2 of heme B porphyrin ring with a hydroxyethyl farnesyl side group. This is Protoheme IX farnesyltransferase from Kineococcus radiotolerans (strain ATCC BAA-149 / DSM 14245 / SRS30216).